Consider the following 194-residue polypeptide: dITP/XTP pyrophosphatase (194 aa).

7–12 (SGNVNK) contributes to the substrate binding site. Residues E38 and D67 each coordinate Mg(2+). The active-site Proton acceptor is the D67. Substrate contacts are provided by residues S68, 151–154 (FGYD), K174, and 179–180 (HR).

This sequence belongs to the HAM1 NTPase family. Homodimer. Mg(2+) is required as a cofactor.

The enzyme catalyses XTP + H2O = XMP + diphosphate + H(+). It catalyses the reaction dITP + H2O = dIMP + diphosphate + H(+). It carries out the reaction ITP + H2O = IMP + diphosphate + H(+). In terms of biological role, pyrophosphatase that catalyzes the hydrolysis of nucleoside triphosphates to their monophosphate derivatives, with a high preference for the non-canonical purine nucleotides XTP (xanthosine triphosphate), dITP (deoxyinosine triphosphate) and ITP. Seems to function as a house-cleaning enzyme that removes non-canonical purine nucleotides from the nucleotide pool, thus preventing their incorporation into DNA/RNA and avoiding chromosomal lesions. The chain is dITP/XTP pyrophosphatase from Treponema denticola (strain ATCC 35405 / DSM 14222 / CIP 103919 / JCM 8153 / KCTC 15104).